A 1385-amino-acid chain; its full sequence is DNA-directed RNA polymerase subunit beta (1385 aa).

This sequence belongs to the RNA polymerase beta chain family. In terms of assembly, the RNAP catalytic core consists of 2 alpha, 1 beta, 1 beta' and 1 omega subunit. When a sigma factor is associated with the core the holoenzyme is formed, which can initiate transcription.

It catalyses the reaction RNA(n) + a ribonucleoside 5'-triphosphate = RNA(n+1) + diphosphate. Functionally, DNA-dependent RNA polymerase catalyzes the transcription of DNA into RNA using the four ribonucleoside triphosphates as substrates. In Jannaschia sp. (strain CCS1), this protein is DNA-directed RNA polymerase subunit beta.